The chain runs to 85 residues: U4-theraphotoxin-Hhn1h (85 aa).

The signal sequence occupies residues 1–22 (MKVTLIAILTCAAVLVLHTTAA). Residues 23–48 (EELEAESQLMEVGMPDTELAAVDEER) constitute a propeptide that is removed on maturation. 3 disulfides stabilise this stretch: Cys-52–Cys-66, Cys-56–Cys-77, and Cys-71–Cys-82.

Belongs to the neurotoxin 12 (Hwtx-2) family. 02 (Hwtx-2) subfamily. In terms of tissue distribution, expressed by the venom gland.

The protein resides in the secreted. Postsynaptic neurotoxin. This chain is U4-theraphotoxin-Hhn1h, found in Cyriopagopus hainanus (Chinese bird spider).